We begin with the raw amino-acid sequence, 396 residues long: Elongation factor Tu 2 (396 aa).

One can recognise a tr-type G domain in the interval 10 to 206 (KPHINVGTIG…VLDSYIPEPQ (197 aa)). Residues 19-26 (GHVDHGKT) are G1. 19–26 (GHVDHGKT) is a binding site for GTP. Position 26 (T26) interacts with Mg(2+). The tract at residues 60–64 (GITIN) is G2. Residues 81 to 84 (DCPG) form a G3 region. Residues 81-85 (DCPGH) and 136-139 (NKAD) each bind GTP. The interval 136 to 139 (NKAD) is G4. Positions 174 to 176 (SAL) are G5.

Belongs to the TRAFAC class translation factor GTPase superfamily. Classic translation factor GTPase family. EF-Tu/EF-1A subfamily. As to quaternary structure, monomer.

The protein localises to the cytoplasm. The enzyme catalyses GTP + H2O = GDP + phosphate + H(+). Its function is as follows. GTP hydrolase that promotes the GTP-dependent binding of aminoacyl-tRNA to the A-site of ribosomes during protein biosynthesis. The chain is Elongation factor Tu 2 from Nitrosomonas eutropha (strain DSM 101675 / C91 / Nm57).